The primary structure comprises 248 residues: NH(3)-dependent NAD(+) synthetase (248 aa).

31–38 provides a ligand contact to ATP; that stretch reads GVSGGVDS. D37 contributes to the Mg(2+) binding site. R114 provides a ligand contact to deamido-NAD(+). T134 is an ATP binding site. E139 lines the Mg(2+) pocket. Deamido-NAD(+) contacts are provided by K147 and D154. Positions 163 and 185 each coordinate ATP. 236 to 237 contributes to the deamido-NAD(+) binding site; that stretch reads HK.

The protein belongs to the NAD synthetase family. Homodimer.

It carries out the reaction deamido-NAD(+) + NH4(+) + ATP = AMP + diphosphate + NAD(+) + H(+). Its pathway is cofactor biosynthesis; NAD(+) biosynthesis; NAD(+) from deamido-NAD(+) (ammonia route): step 1/1. Catalyzes the ATP-dependent amidation of deamido-NAD to form NAD. Uses ammonia as a nitrogen source. This chain is NH(3)-dependent NAD(+) synthetase, found in Methanoregula boonei (strain DSM 21154 / JCM 14090 / 6A8).